The following is an 84-amino-acid chain: Beta-defensin 119 (84 aa).

A signal peptide spans 1–21 (MKLLYLFLAILLAIEEPVISG). Cystine bridges form between cysteine 35–cysteine 49 and cysteine 39–cysteine 56.

The protein belongs to the beta-defensin family.

Its subcellular location is the secreted. Functionally, has antibacterial activity. In Pan troglodytes (Chimpanzee), this protein is Beta-defensin 119 (DEFB119).